Reading from the N-terminus, the 203-residue chain is RNA annealing protein YRA2 (203 aa).

The residue at position 1 (methionine 1) is an N-acetylmethionine. Disordered regions lie at residues 1–60 (MDKA…REEP) and 134–203 (EIYQ…YMKG). The span at 11-20 (NSHTDSSSNH) shows a compositional bias: polar residues. A compositionally biased stretch (basic and acidic residues) spans 47 to 60 (SRSKDRLYREREEP). In terms of domain architecture, RRM spans 64–138 (KRIRISKIPL…AKIEVEIYQP (75 aa)). Composition is skewed to basic residues over residues 139 to 153 (QRKH…RRKQ) and 163 to 180 (PGSH…KNKG).

It belongs to the YRA1 family. As to quaternary structure, associates with mRNPs. Interacts with YRA1.

The protein localises to the nucleus. Functionally, involved in export of poly(A) mRNAs from the nucleus. Recruited to the coding sequences as well as poly-A sites of active genes. This chain is RNA annealing protein YRA2 (YRA2), found in Saccharomyces cerevisiae (strain RM11-1a) (Baker's yeast).